A 345-amino-acid chain; its full sequence is Heat-inducible transcription repressor HrcA (345 aa).

Belongs to the HrcA family.

Functionally, negative regulator of class I heat shock genes (grpE-dnaK-dnaJ and groELS operons). Prevents heat-shock induction of these operons. The protein is Heat-inducible transcription repressor HrcA of Corynebacterium diphtheriae (strain ATCC 700971 / NCTC 13129 / Biotype gravis).